The sequence spans 256 residues: Type III pantothenate kinase (256 aa).

6 to 13 (DCGNTNTV) provides a ligand contact to ATP. 107-110 (GPDR) serves as a coordination point for substrate. Aspartate 109 acts as the Proton acceptor in catalysis. Aspartate 129 serves as a coordination point for K(+). An ATP-binding site is contributed by threonine 132. Threonine 184 contributes to the substrate binding site.

This sequence belongs to the type III pantothenate kinase family. As to quaternary structure, homodimer. NH4(+) serves as cofactor. The cofactor is K(+).

It is found in the cytoplasm. It catalyses the reaction (R)-pantothenate + ATP = (R)-4'-phosphopantothenate + ADP + H(+). It functions in the pathway cofactor biosynthesis; coenzyme A biosynthesis; CoA from (R)-pantothenate: step 1/5. Catalyzes the phosphorylation of pantothenate (Pan), the first step in CoA biosynthesis. The chain is Type III pantothenate kinase from Dinoroseobacter shibae (strain DSM 16493 / NCIMB 14021 / DFL 12).